A 355-amino-acid polypeptide reads, in one-letter code: Sesquiterpene synthase-like protein Agr11 (355 aa).

This sequence belongs to the terpene synthase family.

In Cyclocybe aegerita (Black poplar mushroom), this protein is Sesquiterpene synthase-like protein Agr11.